The primary structure comprises 1578 residues: E3 ubiquitin-protein ligase HECW2 (1578 aa).

Residue Ser48 is modified to Phosphoserine. The 128-residue stretch at 171–298 (MEGGASGSLH…LERQAGDQML (128 aa)) folds into the C2 domain. 2 disordered regions span residues 341–453 (HTVN…FPTD) and 496–802 (IDDG…PSVR). The span at 386-406 (RTSSTLEIDTEDLISTSSRNS) shows a compositional bias: polar residues. Positions 518-532 (ASIHETASLEERLEN) are enriched in basic and acidic residues. Over residues 559 to 576 (SADQGSTELCSSQEVDQP) the composition is skewed to polar residues. The span at 577–593 (TSGADAGASDTSGGSRR) shows a compositional bias: low complexity. Polar residues-rich tracts occupy residues 597–614 (ETESLDQGSEPSQVSSET), 643–664 (SSCNESVTTQLSSVETRCSSLE), and 688–708 (PTSSGPAEGSQESVCTPSSLP). Composition is skewed to low complexity over residues 721-735 (AAEAAALSEQGELGE), 746-755 (AAAAAPAAAA), and 769-782 (AQGACEGATAQEEG). The segment at 737–1074 (WQRRGSLEGA…PRPSSTFNTV (338 aa)) is interaction with TP73. In terms of domain architecture, WW 1 spans 813–846 (EALPPNWEARIDSHGRIFYVDHVNRTTTWQRPTA). Residues 853–880 (LQRSNSIQQMEQLNRRYQSIRRTMTNER) adopt a coiled-coil conformation. A phosphoserine mark is found at Ser858 and Ser915. Positions 991–1024 (LELPRGWEMKHDHQGKAFFVDHNSRTTTFIDPRL) constitute a WW 2 domain. Disordered stretches follow at residues 1030–1075 (RPTS…NTVS) and 1167–1193 (CQSPRGSPVSSPQNSPGTQRANARAPA). Positions 1037-1046 (HRQHLTRQRS) are enriched in basic residues. Positions 1167–1187 (CQSPRGSPVSSPQNSPGTQRA) are enriched in polar residues. Ser1181 carries the phosphoserine modification. One can recognise an HECT domain in the interval 1243–1578 (SRKDLQRNKL…VEETSTFGLE (336 aa)). The Glycyl thioester intermediate role is filled by Cys1546.

As to quaternary structure, interacts with TP73. Interacts with FZR1.

Its subcellular location is the cytoplasm. It localises to the cytoskeleton. The protein localises to the spindle. It catalyses the reaction S-ubiquitinyl-[E2 ubiquitin-conjugating enzyme]-L-cysteine + [acceptor protein]-L-lysine = [E2 ubiquitin-conjugating enzyme]-L-cysteine + N(6)-ubiquitinyl-[acceptor protein]-L-lysine.. It functions in the pathway protein modification; protein ubiquitination. Functionally, E3 ubiquitin-protein ligase that mediates ubiquitination of TP73. Acts to stabilize TP73 and enhance activation of transcription by TP73. Involved in the regulation of mitotic metaphase/anaphase transition. The chain is E3 ubiquitin-protein ligase HECW2 (Hecw2) from Mus musculus (Mouse).